We begin with the raw amino-acid sequence, 292 residues long: MALIPAVTRLTSSVIRILGCNPSAMTLQGTNTYLLGSGSRRILIDTGDEDVPQYIAHLGDVLQQEKASIDTILLTHWHHDHVGGVKSIVGTKLAEKDCRVFKFGRTDAPDVCPEIPTDIKLHPLAHNQEFTTEGANVRVVHTPGHTTDHVVLAMNEGTLFSGDCILGEGTAVFEDLFEYMKSLEKILDIKPQRIFPGHGNVIEEPIGKIEYYINHRNQREQQILQFFVQRPNENLQAMDVVKVVYKETPENLWPAAAYNVNHHLSKLEKEGKLRVSKSADEEFYVYQPTSAL.

7 residues coordinate Zn(2+): H76, H78, D80, H81, H145, D163, and H198.

Belongs to the metallo-beta-lactamase superfamily. Glyoxalase II family.

The chain is Beta-lactamase-like protein 2 homolog from Drosophila melanogaster (Fruit fly).